A 55-amino-acid chain; its full sequence is Large ribosomal subunit protein bL33 (55 aa).

Belongs to the bacterial ribosomal protein bL33 family.

The protein is Large ribosomal subunit protein bL33 of Bradyrhizobium sp. (strain BTAi1 / ATCC BAA-1182).